The sequence spans 541 residues: Transmembrane protein 151 homolog (541 aa).

Transmembrane regions (helical) follow at residues Gly-27–Phe-47, Tyr-73–Trp-93, and Pro-254–Leu-274. The interval Ala-503–Pro-541 is disordered. Positions Ser-515–Asn-535 are enriched in low complexity.

This sequence belongs to the TMEM151 family.

It localises to the membrane. The protein is Transmembrane protein 151 homolog of Caenorhabditis elegans.